Consider the following 329-residue polypeptide: Putative glucose-6-phosphate 1-epimerase (329 aa).

The span at 1 to 13 (MAAPAPAGAAASP) shows a compositional bias: low complexity. Positions 1–20 (MAAPAPAGAAASPSPKPQLP) are disordered. Positions 82, 100, and 105 each coordinate substrate. The active site involves H183. D228 contacts substrate. The active site involves E287.

It belongs to the glucose-6-phosphate 1-epimerase family.

The catalysed reaction is alpha-D-glucose 6-phosphate = beta-D-glucose 6-phosphate. The sequence is that of Putative glucose-6-phosphate 1-epimerase from Cenchrus ciliaris (Buffelgrass).